The following is a 338-amino-acid chain: Lipoate-protein ligase A (338 aa).

The region spanning 29 to 216 (SPDQRVLFLW…AFFNYYDEKV (188 aa)) is the BPL/LPL catalytic domain. ATP contacts are provided by residues R71, 76 to 79 (GAVF), and K134. K134 contacts (R)-lipoate.

Belongs to the LplA family. In terms of assembly, monomer.

The protein resides in the cytoplasm. The enzyme catalyses L-lysyl-[lipoyl-carrier protein] + (R)-lipoate + ATP = N(6)-[(R)-lipoyl]-L-lysyl-[lipoyl-carrier protein] + AMP + diphosphate + H(+). It participates in protein modification; protein lipoylation via exogenous pathway; protein N(6)-(lipoyl)lysine from lipoate: step 1/2. Its pathway is protein modification; protein lipoylation via exogenous pathway; protein N(6)-(lipoyl)lysine from lipoate: step 2/2. Catalyzes both the ATP-dependent activation of exogenously supplied lipoate to lipoyl-AMP and the transfer of the activated lipoyl onto the lipoyl domains of lipoate-dependent enzymes. The polypeptide is Lipoate-protein ligase A (Yersinia enterocolitica serotype O:8 / biotype 1B (strain NCTC 13174 / 8081)).